The sequence spans 174 residues: Peptide deformylase (174 aa).

The Fe cation site is built by Cys-94 and His-136. Residue Glu-137 is part of the active site. His-140 contacts Fe cation.

Belongs to the polypeptide deformylase family. Fe(2+) serves as cofactor.

It catalyses the reaction N-terminal N-formyl-L-methionyl-[peptide] + H2O = N-terminal L-methionyl-[peptide] + formate. Functionally, removes the formyl group from the N-terminal Met of newly synthesized proteins. Requires at least a dipeptide for an efficient rate of reaction. N-terminal L-methionine is a prerequisite for activity but the enzyme has broad specificity at other positions. The sequence is that of Peptide deformylase from Maricaulis maris (strain MCS10) (Caulobacter maris).